We begin with the raw amino-acid sequence, 370 residues long: Uroporphyrinogen decarboxylase (370 aa).

Residues 29–33 (RQAGR), Asp-79, Tyr-155, Ser-210, and His-342 each bind substrate.

This sequence belongs to the uroporphyrinogen decarboxylase family. In terms of assembly, homodimer.

It is found in the cytoplasm. It catalyses the reaction uroporphyrinogen III + 4 H(+) = coproporphyrinogen III + 4 CO2. It functions in the pathway porphyrin-containing compound metabolism; protoporphyrin-IX biosynthesis; coproporphyrinogen-III from 5-aminolevulinate: step 4/4. In terms of biological role, catalyzes the decarboxylation of four acetate groups of uroporphyrinogen-III to yield coproporphyrinogen-III. The chain is Uroporphyrinogen decarboxylase from Acidovorax sp. (strain JS42).